Consider the following 222-residue polypeptide: MLPHGLIVSCQALPDEPLHSSFIMSKMALAAYEGGAVGIRANTKEDILAIKETVDLPVIGIVKRDYNHSDVFITATSKEVDELIESQCEVIALDATLQQRPKETLDELVSYIRTHAPNVEIMADIATVEEAKNAARLGFDYIGTTLHGYTSYTQGQLLYQNDFQFLKDVLQSVDAKVIAEGNVITPDMYKRVMDLGVHCSVVGGAITRPKEITKRFVQVMED.

It belongs to the NanE family.

The catalysed reaction is an N-acyl-D-glucosamine 6-phosphate = an N-acyl-D-mannosamine 6-phosphate. It participates in amino-sugar metabolism; N-acetylneuraminate degradation; D-fructose 6-phosphate from N-acetylneuraminate: step 3/5. Functionally, converts N-acetylmannosamine-6-phosphate (ManNAc-6-P) to N-acetylglucosamine-6-phosphate (GlcNAc-6-P). This Staphylococcus aureus (strain MSSA476) protein is Putative N-acetylmannosamine-6-phosphate 2-epimerase.